The following is a 457-amino-acid chain: Putative methyltransferase MT1451 (457 aa).

Residues 276-282 (CAGPGGK), E301, D325, and D341 contribute to the S-adenosyl-L-methionine site. Catalysis depends on C394, which acts as the Nucleophile.

This sequence belongs to the class I-like SAM-binding methyltransferase superfamily. RsmB/NOP family.

Functionally, may act as RNA methyltransferase. The chain is Putative methyltransferase MT1451 from Mycobacterium tuberculosis (strain CDC 1551 / Oshkosh).